The chain runs to 142 residues: NTF2-related export protein 2 (142 aa).

The region spanning 17 to 136 (AAEEFVNIYY…WKIASDCFRF (120 aa)) is the NTF2 domain.

As to quaternary structure, associates with NXF1, NXF2, NXF3 and NXF5.

The protein resides in the nucleus. The protein localises to the cytoplasm. Regulator of protein export for NES-containing proteins. Also plays a role in mRNA nuclear export. The protein is NTF2-related export protein 2 of Homo sapiens (Human).